Consider the following 846-residue polypeptide: Translation initiation factor IF-2 (846 aa).

The interval 199-219 (KREEEEKKSKAKKAGGKGFKK) is disordered. A compositionally biased stretch (basic residues) spans 207 to 219 (SKAKKAGGKGFKK). One can recognise a tr-type G domain in the interval 345–512 (SRAPVVTIMG…AVLLQSEVLE (168 aa)). The segment at 354–361 (GHVDHGKT) is G1. 354 to 361 (GHVDHGKT) is a GTP binding site. The segment at 379–383 (GITQH) is G2. The tract at residues 400–403 (DTPG) is G3. GTP is bound by residues 400-404 (DTPGH) and 454-457 (NKID). Positions 454-457 (NKID) are G4. The tract at residues 490-492 (SAK) is G5.

This sequence belongs to the TRAFAC class translation factor GTPase superfamily. Classic translation factor GTPase family. IF-2 subfamily.

The protein resides in the cytoplasm. One of the essential components for the initiation of protein synthesis. Protects formylmethionyl-tRNA from spontaneous hydrolysis and promotes its binding to the 30S ribosomal subunits. Also involved in the hydrolysis of GTP during the formation of the 70S ribosomal complex. The polypeptide is Translation initiation factor IF-2 (Francisella tularensis subsp. holarctica (strain LVS)).